The primary structure comprises 298 residues: Putative enoyl-CoA reductase (298 aa).

4 consecutive transmembrane segments (helical) span residues 162-182, 189-209, 229-249, and 254-274; these read CVYY…PYYT, LVNA…AVHV, ILFS…WVAF, and SMLT…EWAV.

This sequence belongs to the steroid 5-alpha reductase family.

Its subcellular location is the membrane. It functions in the pathway lipid metabolism; fatty acid biosynthesis. In terms of biological role, involved in the synthesis of fatty acids. The polypeptide is Putative enoyl-CoA reductase (Trypanosoma brucei brucei (strain 927/4 GUTat10.1)).